Reading from the N-terminus, the 185-residue chain is Ribosome-recycling factor (185 aa).

The segment at 138–159 (KVKKLEKDKEISEDESKKAQEQ) is disordered.

It belongs to the RRF family.

The protein localises to the cytoplasm. Its function is as follows. Responsible for the release of ribosomes from messenger RNA at the termination of protein biosynthesis. May increase the efficiency of translation by recycling ribosomes from one round of translation to another. The chain is Ribosome-recycling factor from Helicobacter acinonychis (strain Sheeba).